The chain runs to 134 residues: MAAEWHKIIEDVSKNNKFEDAAIVDYKTKKNVLAAIPNRTFAKIIPGEVIALITNRNILKPRIGQKFFIVYTNSLMDENTYTMELLTGYAPVSPIVIARTHTALIFLMGKPTTSRREVYRTCRDYATNVRATGN.

It belongs to the profilin family. As to quaternary structure, interacts with host Tpm1. Interacts with protein A25.

It is found in the host cytoplasm. In terms of biological role, participates in either intracellular transport of viral proteins or intercellular spread of the virus. Cellular profilins modulate actin filament dynamics (polymerization and depolymerization) via direct binding to actin through an actin-binding domain as well as by modulation of other actin-binding proteins. In contrast to cellular homologs, the poxvirus profilins seem to bind actin only weakly. The sequence is that of Profilin from Ectromelia virus (strain Moscow) (ECTV).